The chain runs to 126 residues: Glycine cleavage system H protein (126 aa).

The 83-residue stretch at Lys-22–Glu-104 folds into the Lipoyl-binding domain. Position 63 is an N6-lipoyllysine (Lys-63).

This sequence belongs to the GcvH family. The glycine cleavage system is composed of four proteins: P, T, L and H. The cofactor is (R)-lipoate.

Functionally, the glycine cleavage system catalyzes the degradation of glycine. The H protein shuttles the methylamine group of glycine from the P protein to the T protein. Is also involved in protein lipoylation via its role as an octanoyl/lipoyl carrier protein intermediate. This is Glycine cleavage system H protein from Oceanobacillus iheyensis (strain DSM 14371 / CIP 107618 / JCM 11309 / KCTC 3954 / HTE831).